The primary structure comprises 334 residues: Glycerol-3-phosphate dehydrogenase [NAD(P)+] (334 aa).

Positions 13, 33, and 106 each coordinate NADPH. Sn-glycerol 3-phosphate contacts are provided by Lys-106, Gly-137, and Ser-139. Ala-141 is an NADPH binding site. Residues Lys-192, Asp-245, Ser-255, Arg-256, and Asn-257 each contribute to the sn-glycerol 3-phosphate site. Catalysis depends on Lys-192, which acts as the Proton acceptor. Arg-256 serves as a coordination point for NADPH. Residues Val-280 and Glu-282 each contribute to the NADPH site.

Belongs to the NAD-dependent glycerol-3-phosphate dehydrogenase family.

It localises to the cytoplasm. It carries out the reaction sn-glycerol 3-phosphate + NAD(+) = dihydroxyacetone phosphate + NADH + H(+). The enzyme catalyses sn-glycerol 3-phosphate + NADP(+) = dihydroxyacetone phosphate + NADPH + H(+). The protein operates within membrane lipid metabolism; glycerophospholipid metabolism. In terms of biological role, catalyzes the reduction of the glycolytic intermediate dihydroxyacetone phosphate (DHAP) to sn-glycerol 3-phosphate (G3P), the key precursor for phospholipid synthesis. This Chlamydia trachomatis serovar L2 (strain ATCC VR-902B / DSM 19102 / 434/Bu) protein is Glycerol-3-phosphate dehydrogenase [NAD(P)+].